The following is a 298-amino-acid chain: MRSLYLIVFIVISLVKASKSDDGFCSAPSIVESDEKTNPIYWKATNPTLSPSHLQDLPGFTRSVYKRDHALITPESHVYSPLPDWTNTLGAYLITPATGSHFVMYLAKMKEMSSSGLPPQDIERLIFVVEGAVTLTNTSSSSKKLTVDSYAYLPPNFHHSLDCVESATLVVFERRYEYLGSHTTELIVGSTDKQPLLETPGEVFELRKLLPMSVAYDFNIHTMDFQPGEFLNVKEVHYNQHGLLLLEGQGIYRLGDNWYPVQAGDVIWMAPFVPQWYAALGKTRSRYLLYKDVNRNPL.

The first 20 residues, 1–20 (MRSLYLIVFIVISLVKASKS), serve as a signal peptide directing secretion. A Cupin type-2 domain is found at 222–288 (TMDFQPGEFL…ALGKTRSRYL (67 aa)). The Mn(2+) site is built by E235, H237, H241, and Q275. E235 contacts substrate. 3 residues coordinate substrate: Q275, Y287, and K291.

Belongs to the UGHY family. As to quaternary structure, homooctamer. It depends on Mn(2+) as a cofactor.

It is found in the endoplasmic reticulum. The catalysed reaction is (S)-2-ureidoglycine + H2O = (S)-ureidoglycolate + NH4(+). Involved in the catabolism of purine nucleotides. Can use (S)-2-ureidoglycine as substrate, but not allantoate. The sequential activity of AAH, UGLYAH and UAH allows a complete purine breakdown without the intermediate generation of urea. This is (S)-ureidoglycine aminohydrolase (UGLYAH) from Arabidopsis thaliana (Mouse-ear cress).